Consider the following 1027-residue polypeptide: MIRQCWAGLRLCRALYQTSYRWHGKSACERALRYSPGESIHGFTVNEVTPVPELFLTAVKLSHDNTGAKYLHVAREDSNNLFSVQFRTTPLDSTGVPHILEHTVLCGSQKYPCRDPFFKMLNRSLSTFMNAFTASDYTMYPFSTQNAKDFQNLLSVYLDAVFFPCLRELDFWQEGWRLEHENPEDPNSPLIFKGIVFNEMKGAFTDNEKVFSQHLQNKLLPDHTYSVVSGGEPLNIPDLTWEQLKEFHATHYHPSNARFFTYGNLPLEMHLKQIHEDALSKFGRIDPKTSVPPQERWQSPREYSISCGVDSFASDPEKQTMVSVNFLLSEITDSFEAFTLSLLSSLMVDGPNSPFYKALIEANLGTDFSPDTGFNNYTRETYFSIGLQGINKEDSEKVKHIINRTINEIAEQGIEPERIEALLHKLEIQMKHQSTSFGLTLASYIASCWNHEGDPVDLLKIGDKISRFRQCLKENPKFLQDKVKQYFQVNQHRMMLSMSPDEQHYDKEEQLEEEKLTQKVKALSEEERKQIYEKGLELISLQSKPQDFSCLPALKVSDIEPQIPLTDLEIAYAGDVPVQYCTQPTNGMVYFRAVSSLNTLPEELKPYVPLFCSVITKLGCGVYNYREQAQQMELTTGGMSVCPHIISDDSSLDTYEQGILFSSLCLDRNMPDMMHLWSEIFNSPHFDDEERLRVLVRMSAQEMSNGIPDSGHVYASIRASRTLTPTGELQELFSGMDQVKMIKRIAEMPDMGSILRKLSRIRKYVLLSDNMRCSINAAPQQMETASKEMEHFLTGITRSKKERKAIRPHVVEKSSNPSPSGSEISRTATRKLVGDPTFKPCQMKTHFCLSFPVNYIGECVRTVPYTHPDYASLRILARIMTAKFLHGEIREKGGAYGGGAKLSFDGIFGFYSYRDPNSLSTLSTFQKATDWAKSGQFSQQDVDEAKLSVFSAVDSPIAPSDKGMNHFLHGISDEMKQRHREELFAVTHSDLTNASNKYLTAGQCTRGTAILGPENKNIAKDPSWIIR.

The transit peptide at 1 to 22 directs the protein to the mitochondrion; it reads MIRQCWAGLRLCRALYQTSYRW. Residue histidine 98 participates in Zn(2+) binding. Glutamate 101 serves as the catalytic Proton acceptor. Residues histidine 102 and glutamate 199 each coordinate Zn(2+). The cysteines at positions 113 and 550 are disulfide-linked. A disordered region spans residues 803 to 827; the sequence is RKAIRPHVVEKSSNPSPSGSEISRT. A compositionally biased stretch (low complexity) spans 814–825; sequence SSNPSPSGSEIS.

This sequence belongs to the peptidase M16 family. PreP subfamily. As to quaternary structure, monomer and homodimer; homodimerization is induced by binding of the substrate. Zn(2+) is required as a cofactor. Post-translationally, a disulfide bond locks the enzyme in the closed conformation preventing substrate entry into the catalytic chamber.

The protein resides in the mitochondrion matrix. Its activity is regulated as follows. Mainly exists in a closed and catalytically competent conformation but a closed-to-open switch allows substrate entry into the catalytic chamber. Substrate binding induces closure and dimerization. A disulfide bond may lock the enzyme in a closed conformation preventing substrate entry into the catalytic chamber, participating in redox regulation of the enzyme. Inhibited by metal-chelating agents. Inhibited by nickel and zinc excess, and slightly activated by manganese. In terms of biological role, metalloendopeptidase of the mitochondrial matrix that functions in peptide cleavage and degradation rather than in protein processing. Has an ATP-independent activity. Specifically cleaves peptides in the range of 5 to 65 residues. Shows a preference for cleavage after small polar residues and before basic residues, but without any positional preference. Degrades the transit peptides of mitochondrial proteins after their cleavage. Also degrades other unstructured peptides. The chain is Presequence protease, mitochondrial (pitrm1) from Xenopus laevis (African clawed frog).